The following is a 117-amino-acid chain: MNTQQLFREITQEQIKSDVPAFRPGDTVRVHVKVVEGTRERIQLFEGVVIKRHGGGISETFTVRKISYGVGVERAFPLHSPRVAQIEVVRYGKVRRAKLYYLRNLRGKAARIKEIRR.

This sequence belongs to the bacterial ribosomal protein bL19 family.

This protein is located at the 30S-50S ribosomal subunit interface and may play a role in the structure and function of the aminoacyl-tRNA binding site. This is Large ribosomal subunit protein bL19 from Exiguobacterium sibiricum (strain DSM 17290 / CCUG 55495 / CIP 109462 / JCM 13490 / 255-15).